Reading from the N-terminus, the 504-residue chain is Cytochrome P450 4A24 (504 aa).

Helical transmembrane passes span 6–26 and 112–132; these read LASA…LLLL and VVYR…NGQT. Cysteine 451 provides a ligand contact to heme.

This sequence belongs to the cytochrome P450 family. It depends on heme as a cofactor.

The protein resides in the endoplasmic reticulum membrane. The catalysed reaction is an omega-methyl-long-chain fatty acid + reduced [NADPH--hemoprotein reductase] + O2 = an omega-hydroxy-long-chain fatty acid + oxidized [NADPH--hemoprotein reductase] + H2O + H(+). Functionally, catalyzes the omega- and (omega-1)-hydroxylation of various fatty acids such as laurate and palmitate. Has no activity toward taurochenodeoxycholic acid. The polypeptide is Cytochrome P450 4A24 (CYP4A24) (Sus scrofa (Pig)).